A 367-amino-acid polypeptide reads, in one-letter code: Leu/Ile/Val-binding protein (367 aa).

An N-terminal signal peptide occupies residues 1–23; that stretch reads MNMKGKALLAGCIALSLSNMAFA. The cysteines at positions 76 and 101 are disulfide-linked.

The protein belongs to the leucine-binding protein family.

The protein localises to the periplasm. Its function is as follows. This protein is a component of the leucine, isoleucine, valine, (threonine) transport system, which is one of the two periplasmic binding protein-dependent transport systems of the high-affinity transport of the branched-chain amino acids. This chain is Leu/Ile/Val-binding protein (livJ), found in Citrobacter freundii.